The chain runs to 110 residues: Large ribosomal subunit protein P2C (110 aa).

The disordered stretch occupies residues 83–110; the sequence is APAAEEAAKEEAKEEEESDEDMGFGLFD. Acidic residues predominate over residues 95 to 104; that stretch reads KEEEESDEDM. S100 is subject to Phosphoserine.

The protein belongs to the eukaryotic ribosomal protein P1/P2 family. In terms of assembly, component of the large ribosomal subunit (LSU). Mature yeast ribosomes consist of a small (40S) and a large (60S) subunit. The 40S small subunit contains 1 molecule of ribosomal RNA (18S rRNA) and at least 33 different proteins. The large 60S subunit contains 3 rRNA molecules (25S, 5.8S and 5S rRNA) and at least 46 different proteins. The acidic ribosomal P-proteins form the stalk structure of the 60S subunit. They are organized as a pentameric complex in which uL10/P0 interacts with 2 heterodimers of P1 and P2 proteins.

The protein localises to the cytoplasm. In terms of biological role, component of the ribosome, a large ribonucleoprotein complex responsible for the synthesis of proteins in the cell. The small ribosomal subunit (SSU) binds messenger RNAs (mRNAs) and translates the encoded message by selecting cognate aminoacyl-transfer RNA (tRNA) molecules. The large subunit (LSU) contains the ribosomal catalytic site termed the peptidyl transferase center (PTC), which catalyzes the formation of peptide bonds, thereby polymerizing the amino acids delivered by tRNAs into a polypeptide chain. The nascent polypeptides leave the ribosome through a tunnel in the LSU and interact with protein factors that function in enzymatic processing, targeting, and the membrane insertion of nascent chains at the exit of the ribosomal tunnel. This chain is Large ribosomal subunit protein P2C (rpp203), found in Schizosaccharomyces pombe (strain 972 / ATCC 24843) (Fission yeast).